The following is a 460-amino-acid chain: Argininosuccinate lyase (460 aa).

Belongs to the lyase 1 family. Argininosuccinate lyase subfamily.

Its subcellular location is the cytoplasm. It carries out the reaction 2-(N(omega)-L-arginino)succinate = fumarate + L-arginine. It participates in amino-acid biosynthesis; L-arginine biosynthesis; L-arginine from L-ornithine and carbamoyl phosphate: step 3/3. This chain is Argininosuccinate lyase, found in Lacticaseibacillus paracasei (strain ATCC 334 / BCRC 17002 / CCUG 31169 / CIP 107868 / KCTC 3260 / NRRL B-441) (Lactobacillus paracasei).